The primary structure comprises 36 residues: NAAAEIFRIAAVMNGLTLVGVAIGFVLLRIEATVEE.

The Lumenal portion of the chain corresponds to 1-5 (NAAAE). The chain crosses the membrane as a helical span at residues 6–28 (IFRIAAVMNGLTLVGVAIGFVLL). Residues 29–36 (RIEATVEE) are Stromal-facing.

This sequence belongs to the PetM family. As to quaternary structure, the 4 large subunits of the cytochrome b6-f complex are cytochrome b6, subunit IV (17 kDa polypeptide, PetD), cytochrome f and the Rieske protein, while the 4 small subunits are PetG, PetL, PetM and PetN. The complex functions as a dimer.

It localises to the plastid. The protein localises to the chloroplast thylakoid membrane. In terms of biological role, component of the cytochrome b6-f complex, which mediates electron transfer between photosystem II (PSII) and photosystem I (PSI), cyclic electron flow around PSI, and state transitions. The chain is Cytochrome b6-f complex subunit 7 from Spinacia oleracea (Spinach).